Consider the following 634-residue polypeptide: uncharacterized protein (634 aa).

An N-terminal signal peptide occupies residues 1–40; the sequence is MWLQQRLKGLPGLLSSSWARRLLCLLGLLVLLLWFASSGA. Residues 41 to 589 are Extracellular-facing; sequence RRAAGGLHLP…DEHMAQQDPG (549 aa). A glycan (N-linked (GlcNAc...) asparagine) is linked at asparagine 363. The helical transmembrane segment at 590 to 610 threads the bilayer; it reads LPFLFWFSVASLITLFHLFLF. Residues 611-634 lie on the Cytoplasmic side of the membrane; that stretch reads KLIYNEYCGPGAKPLFRSKEDPSV.

Its subcellular location is the membrane. This is an uncharacterized protein from Mus musculus (Mouse).